The following is a 161-amino-acid chain: MSEELLKLLKAEGLDLLSCMHCGICTGSCPSGRHTGLNTRRIIRDARKNRAAVLSDYDLWLCTTCYTCQERCPRGIPITDAILELRRLAVREGLMLPEHRFVSEMVLECGHAVPLDEETKKKREELGLDPIPETVQKDPEALEGLKTLLKTCKFDELVAKK.

4Fe-4S ferredoxin-type domains are found at residues 10 to 40 (KAEG…LNTR) and 51 to 82 (AAVL…TDAI). [4Fe-4S] cluster is bound by residues Cys19, Cys22, Cys25, Cys29, Cys62, Cys65, Cys68, and Cys72.

Belongs to the HdrC family. The ferredoxin/F(420)H(2)-dependent CoB-CoM heterodisulfide reductase is composed of three subunits; HdrA2, HdrB2 and HdrC2. It depends on [4Fe-4S] cluster as a cofactor.

It localises to the cytoplasm. The catalysed reaction is coenzyme B + coenzyme M + 2 oxidized [2Fe-2S]-[ferredoxin] = coenzyme M-coenzyme B heterodisulfide + 2 reduced [2Fe-2S]-[ferredoxin] + 2 H(+). It carries out the reaction coenzyme B + 2 oxidized coenzyme F420-(gamma-L-Glu)(n) + coenzyme M + 2 reduced [2Fe-2S]-[ferredoxin] + 4 H(+) = coenzyme M-coenzyme B heterodisulfide + 2 reduced coenzyme F420-(gamma-L-Glu)(n) + 2 oxidized [2Fe-2S]-[ferredoxin]. Its pathway is cofactor metabolism; coenzyme M-coenzyme B heterodisulfide reduction; coenzyme B and coenzyme M from coenzyme M-coenzyme B heterodisulfide: step 1/1. In terms of biological role, part of a complex that catalyzes the reversible reduction of CoM-S-S-CoB to the thiol-coenzymes H-S-CoM (coenzyme M) and H-S-CoB (coenzyme B). Catalyzes the transfer of electrons from ferredoxin to CoM-S-S-CoB during methanogenesis from acetate. Electrons transfer from ferredoxin to CoM-S-S-CoB via HdrA2, HdrC2 and HdrB2. In addition, the complex can use electron bifurcation to direct electron pairs from reduced coenzyme F420 towards the reduction of both ferredoxin and CoB-CoM heterodisulfide. This activity may take place during Fe(III)-dependent anaerobic methane oxidation. The protein is Ferredoxin/F(420)H(2)-dependent CoB-CoM heterodisulfide reductase subunit C of Methanosarcina acetivorans (strain ATCC 35395 / DSM 2834 / JCM 12185 / C2A).